A 559-amino-acid chain; its full sequence is 2-isopropylmalate synthase (559 aa).

The Pyruvate carboxyltransferase domain maps to 30–304; the sequence is PLWAAVDLRD…DPGIDFSRMK (275 aa). Asp39, His243, His245, and Asn279 together coordinate Mg(2+). The regulatory domain stretch occupies residues 436–559; it reads VPMGWVLRSY…ETSEQLIANS (124 aa).

It belongs to the alpha-IPM synthase/homocitrate synthase family. LeuA type 2 subfamily. Homodimer. Mg(2+) serves as cofactor.

It is found in the cytoplasm. It catalyses the reaction 3-methyl-2-oxobutanoate + acetyl-CoA + H2O = (2S)-2-isopropylmalate + CoA + H(+). It participates in amino-acid biosynthesis; L-leucine biosynthesis; L-leucine from 3-methyl-2-oxobutanoate: step 1/4. In terms of biological role, catalyzes the condensation of the acetyl group of acetyl-CoA with 3-methyl-2-oxobutanoate (2-ketoisovalerate) to form 3-carboxy-3-hydroxy-4-methylpentanoate (2-isopropylmalate). This chain is 2-isopropylmalate synthase, found in Alcanivorax borkumensis (strain ATCC 700651 / DSM 11573 / NCIMB 13689 / SK2).